The following is a 394-amino-acid chain: Obg-like ATPase 1 (394 aa).

The region spanning 25 to 282 (LKIGIVGLPN…MAPDEAAKYC (258 aa)) is the OBG-type G domain. Residues 34–39 (NVGKST), 56–60 (FCTIE), and 94–97 (DIAG) contribute to the ATP site. Mg(2+)-binding residues include Ser38 and Thr58. Phe129 contacts GTP. ATP is bound by residues 230–231 (NL), Leu231, and 263–265 (SGV). Residue 263–265 (SGV) participates in GTP binding. Positions 303 to 386 (NLIYFFTAGP…QDGDIIFFKF (84 aa)) constitute a TGS domain.

The protein belongs to the TRAFAC class OBG-HflX-like GTPase superfamily. OBG GTPase family. YchF/OLA1 subfamily. Monomer (Potential). Interacts with CAR4/GAP1. Mg(2+) is required as a cofactor.

It localises to the cytoplasm. The protein resides in the cytosol. Activated by GAP1. Hydrolyzes ATP, and can also hydrolyze GTP with lower efficiency. Has lower affinity for GTP (Potential). Exhibits GTPase activity. Confers sensitivity to salinity stress by suppressing the anti-oxidation enzymatic activities and increasing lipid peroxidation thus leading to the accumulation of reactive oxygen species (ROS). Acts as a negative regulator of disease resistance against bacterial pathogen. This chain is Obg-like ATPase 1, found in Arabidopsis thaliana (Mouse-ear cress).